A 706-amino-acid polypeptide reads, in one-letter code: Polyribonucleotide nucleotidyltransferase (706 aa).

Positions 488 and 494 each coordinate Mg(2+). The KH domain occupies Pro-555–Ile-614. Residues Gly-624–Lys-692 form the S1 motif domain.

Belongs to the polyribonucleotide nucleotidyltransferase family. The cofactor is Mg(2+).

Its subcellular location is the cytoplasm. It catalyses the reaction RNA(n+1) + phosphate = RNA(n) + a ribonucleoside 5'-diphosphate. Functionally, involved in mRNA degradation. Catalyzes the phosphorolysis of single-stranded polyribonucleotides processively in the 3'- to 5'-direction. This chain is Polyribonucleotide nucleotidyltransferase, found in Albidiferax ferrireducens (strain ATCC BAA-621 / DSM 15236 / T118) (Rhodoferax ferrireducens).